A 182-amino-acid chain; its full sequence is Prorelaxin (182 aa).

A signal peptide spans 1–25 (MRRLFLSHVLGAWLLLSQLPRELSG). Gln-26 bears the Pyrrolidone carboxylic acid mark. Cystine bridges form between Cys-35–Cys-169, Cys-47–Cys-182, and Cys-168–Cys-173. Positions 54 to 156 (KTVLRLEEPG…LKNLGLDKHS (103 aa)) are cleaved as a propeptide — connecting peptide. A propeptide spanning residues 161-162 (MI) is cleaved from the precursor. Pyrrolidone carboxylic acid is present on Gln-163.

Belongs to the insulin family. In terms of assembly, heterodimer of a B chain and an A chain linked by two disulfide bonds.

It is found in the secreted. In terms of biological role, relaxin is an ovarian hormone that acts with estrogen to produce dilatation of the birth canal in many mammals. The polypeptide is Prorelaxin (RLN) (Equus caballus (Horse)).